Consider the following 615-residue polypeptide: Chaperone protein DnaK (615 aa).

At threonine 175 the chain carries Phosphothreonine; by autocatalysis. Positions 573-615 (SQEMYQKAAQEQQAAQGAEQAQDNGPKDDNVVDADFKEVDEDK) are disordered. Low complexity predominate over residues 580 to 594 (AAQEQQAAQGAEQAQ). Over residues 597–609 (GPKDDNVVDADFK) the composition is skewed to basic and acidic residues.

It belongs to the heat shock protein 70 family.

Functionally, acts as a chaperone. This chain is Chaperone protein DnaK, found in Clostridioides difficile (strain 630) (Peptoclostridium difficile).